The chain runs to 122 residues: Large ribosomal subunit protein uL14 (122 aa).

The protein belongs to the universal ribosomal protein uL14 family. In terms of assembly, part of the 50S ribosomal subunit. Forms a cluster with proteins L3 and L19. In the 70S ribosome, L14 and L19 interact and together make contacts with the 16S rRNA in bridges B5 and B8.

Its function is as follows. Binds to 23S rRNA. Forms part of two intersubunit bridges in the 70S ribosome. The sequence is that of Large ribosomal subunit protein uL14 from Dechloromonas aromatica (strain RCB).